Here is a 245-residue protein sequence, read N- to C-terminus: Complement C1q subcomponent subunit A (245 aa).

Positions 1 to 22 (METSQGWLVACVLAVTLVWTVA) are cleaved as a signal peptide. Residues 31–109 (GKDGVAGIPG…KGVKGNPGNI (79 aa)) enclose the Collagen-like domain. A disordered region spans residues 35–111 (VAGIPGRPGR…VKGNPGNIRD (77 aa)). Proline 39 and proline 45 each carry 4-hydroxyproline. Lysine 48 carries the 5-hydroxylysine modification. Lysine 48 is a glycosylation site (O-linked (Gal...) hydroxylysine). Proline 54 carries the 4-hydroxyproline modification. The residue at position 67 (lysine 67) is a 5-hydroxylysine. O-linked (Gal...) hydroxylysine glycosylation is present at lysine 67. Residues proline 79 and proline 85 each carry the 4-hydroxyproline modification. Lysine 100 is modified (5-hydroxylysine). The O-linked (Gal...) hydroxylysine glycan is linked to lysine 100. A C1q domain is found at 110–245 (RDQPRPAFSA…FSGFLIFPSA (136 aa)). Asparagine 146 carries N-linked (GlcNAc...) asparagine glycosylation. An intrachain disulfide couples cysteine 172 to cysteine 190. Residue glutamine 199 participates in Ca(2+) binding.

Core component of the complement C1 complex, a calcium-dependent complex composed of 1 molecule of the C1Q subcomplex, 2 molecules of C1R and 2 molecules of C1S. The C1Q subcomplex is composed 18 subunits: 3 chains of C1QA, C1QB, and C1QC trimerize to form 6 collagen-like triple helices connected to six globular ligand-recognition modules (C1q domain). Interacts with CR1 (via Sushi 24 and Sushi 25 domains). Interacts (via C-terminus) with CD33; this interaction activates CD33 inhibitory motifs. In terms of processing, O-linked glycans are assumed to be the Glc-Gal disaccharides typically found as secondary modifications of hydroxylated lysines in collagen-like domains.

Its subcellular location is the secreted. It is found in the cell surface. The C1Q subcomplex is inhibited by sulfated molecules, such as triterpenoid sulfates, heparan sulfate, or chondroitin sulfates. Its function is as follows. Core component of the complement C1 complex, a multiprotein complex that initiates the classical pathway of the complement system, a cascade of proteins that leads to phagocytosis and breakdown of pathogens and signaling that strengthens the adaptive immune system. The classical complement pathway is initiated by the C1Q subcomplex of the C1 complex, which specifically binds IgG or IgM immunoglobulins complexed with antigens, forming antigen-antibody complexes on the surface of pathogens: C1QA, together with C1QB and C1QC, specifically recognizes and binds the Fc regions of IgG or IgM via its C1q domain. Immunoglobulin-binding activates the proenzyme C1R, which cleaves C1S, initiating the proteolytic cascade of the complement system. The C1Q subcomplex is activated by a hexamer of IgG complexed with antigens, while it is activated by a pentameric IgM. The C1Q subcomplex also recognizes and binds phosphatidylserine exposed on the surface of cells undergoing programmed cell death, possibly promoting activation of the complement system. The chain is Complement C1q subcomponent subunit A from Rattus norvegicus (Rat).